Consider the following 298-residue polypeptide: 4-hydroxy-tetrahydrodipicolinate synthase (298 aa).

Thr51 is a pyruvate binding site. Tyr140 acts as the Proton donor/acceptor in catalysis. The active-site Schiff-base intermediate with substrate is Lys168. Ile210 contacts pyruvate.

It belongs to the DapA family. In terms of assembly, homotetramer; dimer of dimers.

It is found in the cytoplasm. It carries out the reaction L-aspartate 4-semialdehyde + pyruvate = (2S,4S)-4-hydroxy-2,3,4,5-tetrahydrodipicolinate + H2O + H(+). It participates in amino-acid biosynthesis; L-lysine biosynthesis via DAP pathway; (S)-tetrahydrodipicolinate from L-aspartate: step 3/4. Functionally, catalyzes the condensation of (S)-aspartate-beta-semialdehyde [(S)-ASA] and pyruvate to 4-hydroxy-tetrahydrodipicolinate (HTPA). In Acidovorax sp. (strain JS42), this protein is 4-hydroxy-tetrahydrodipicolinate synthase.